The sequence spans 568 residues: Urease subunit alpha (568 aa).

Positions Gly130–Phe568 constitute a Urease domain. 3 residues coordinate Ni(2+): His135, His137, and Lys218. Residue Lys218 is modified to N6-carboxylysine. Residue His220 participates in substrate binding. Positions 247 and 273 each coordinate Ni(2+). Catalysis depends on His321, which acts as the Proton donor. Position 361 (Asp361) interacts with Ni(2+).

This sequence belongs to the metallo-dependent hydrolases superfamily. Urease alpha subunit family. In terms of assembly, heterotrimer of UreA (gamma), UreB (beta) and UreC (alpha) subunits. Three heterotrimers associate to form the active enzyme. Ni cation is required as a cofactor. Post-translationally, carboxylation allows a single lysine to coordinate two nickel ions.

It localises to the cytoplasm. The enzyme catalyses urea + 2 H2O + H(+) = hydrogencarbonate + 2 NH4(+). It participates in nitrogen metabolism; urea degradation; CO(2) and NH(3) from urea (urease route): step 1/1. The chain is Urease subunit alpha from Burkholderia cenocepacia (strain ATCC BAA-245 / DSM 16553 / LMG 16656 / NCTC 13227 / J2315 / CF5610) (Burkholderia cepacia (strain J2315)).